Here is a 431-residue protein sequence, read N- to C-terminus: Glucose-1-phosphate adenylyltransferase (431 aa).

K39 is a beta-D-fructose 1,6-bisphosphate binding site. Residues R40, H46, and R52 each contribute to the AMP site. Position 114 (Y114) interacts with alpha-D-glucose 1-phosphate. Position 130 (R130) interacts with AMP. Alpha-D-glucose 1-phosphate is bound by residues G179, E194–K195, and S212. R386 lines the AMP pocket. Residue Q429 to R431 participates in beta-D-fructose 1,6-bisphosphate binding.

It belongs to the bacterial/plant glucose-1-phosphate adenylyltransferase family. Homotetramer.

The enzyme catalyses alpha-D-glucose 1-phosphate + ATP + H(+) = ADP-alpha-D-glucose + diphosphate. Its pathway is glycan biosynthesis; glycogen biosynthesis. With respect to regulation, allosterically activated by fructose-1,6-bisphosphate (F16BP) and inhibited by AMP. In terms of biological role, involved in the biosynthesis of ADP-glucose, a building block required for the elongation reactions to produce glycogen. Catalyzes the reaction between ATP and alpha-D-glucose 1-phosphate (G1P) to produce pyrophosphate and ADP-Glc. The protein is Glucose-1-phosphate adenylyltransferase of Klebsiella pneumoniae subsp. pneumoniae (strain ATCC 700721 / MGH 78578).